Consider the following 479-residue polypeptide: Tegument protein VP16 homolog (479 aa).

This sequence belongs to the herpesviridae tegument protein VP16 protein family. Associates with the VP16-induced complex; binding to host HCFC1 activates VP16 for association with the octamer motif-binding host protein POU2F1, to form a multiprotein-DNA complex responsible for activating transcription of the viral immediate early genes.

The protein localises to the virion tegument. It localises to the host nucleus. Transcriptional activator of immediate-early (IE) gene products (alpha genes). Acts as a key activator of lytic infection by initiating the lytic program through the assembly of the transcriptional regulatory VP16-induced complex composed of VP16 and two cellular factors, HCFC1 and POU2F1. VP16-induced complex represents a regulatory switch: when it is on, it promotes IE-gene expression and thus lytic infection, and when it is off, it limits IE-gene transcription favoring latent infection. Its function is as follows. May play a role in the aggregation of tegument proteins around nucleocapsids during virus morphogenesis. This Equus caballus (Horse) protein is Tegument protein VP16 homolog.